The following is a 216-amino-acid chain: Large ribosomal subunit protein uL3 (216 aa).

Glutamine 157 carries the post-translational modification N5-methylglutamine.

This sequence belongs to the universal ribosomal protein uL3 family. As to quaternary structure, part of the 50S ribosomal subunit. Forms a cluster with proteins L14 and L19. Methylated by PrmB.

One of the primary rRNA binding proteins, it binds directly near the 3'-end of the 23S rRNA, where it nucleates assembly of the 50S subunit. This chain is Large ribosomal subunit protein uL3, found in Xanthomonas oryzae pv. oryzae (strain MAFF 311018).